The sequence spans 631 residues: MBT domain-containing protein 1 (631 aa).

The interval 1-31 is disordered; that stretch reads MFDGYDSCSEDTSSSSSSEESEEEVAPLPSN. The FCS-type zinc-finger motif lies at 45 to 80; that stretch reads PDGKSGMATCEMCGMVGVRDAFYSKTKRFCSVSCSR. 4 residues coordinate Zn(2+): Cys54, Cys57, Cys74, and Cys78. Position 115 is an N6-acetyllysine (Lys115). MBT repeat units lie at residues 144–248, 256–353, 354–459, and 467–563; these read FSWG…LVPP, TNWK…IGHR, FKRS…LTPP, and FKWF…LQPP. The disordered stretch occupies residues 563–631; sequence PASQSSRESQ…SATVYIKQEP (69 aa). The segment covering 564 to 576 has biased composition (low complexity); the sequence is ASQSSRESQSASS. Positions 577–593 are enriched in basic residues; it reads KQKKKAKSQQYKGHKKM.

As to quaternary structure, monomer. Component of the NuA4 histone acetyltransferase complex. Interacts with EPC1; interaction is direct and promotes recruitment of MBTD1 into the NuA4 histone acetyltransferase complex.

It is found in the nucleus. It localises to the chromosome. In terms of biological role, chromatin reader component of the NuA4 histone acetyltransferase complex, a multiprotein complex involved in transcriptional activation of select genes principally by acetylation of nucleosomal histones H4 and H2A. The NuA4 complex plays a direct role in repair of DNA double-strand breaks (DSBs) by promoting homologous recombination (HR). MBTD1 specifically recognizes and binds monomethylated and dimethylated 'Lys-20' on histone H4 (H4K20me1 and H4K20me2, respectively). In the NuA4 complex, MBTD1 promotes recruitment of the complex to H4K20me marks by competing with TP53BP1 for binding to H4K20me. Following recruitment to H4K20me at DNA breaks, the NuA4 complex catalyzes acetylation of 'Lys-15' on histone H2A (H2AK15), blocking the ubiquitination mark required for TP53BP1 localization at DNA breaks, thereby promoting homologous recombination (HR). This Mus musculus (Mouse) protein is MBT domain-containing protein 1.